Consider the following 78-residue polypeptide: Conotoxin TsMSGL-11 (78 aa).

Positions 1–24 are cleaved as a signal peptide; that stretch reads MSGLGIMVLTLLLLVFMATSHQDA. A propeptide spanning residues 25-44 is cleaved from the precursor; the sequence is GEKQATQRDAINVRRRRSIT. 3 cysteine pairs are disulfide-bonded: cysteine 51–cysteine 63, cysteine 55–cysteine 72, and cysteine 62–cysteine 76. At phenylalanine 77 the chain carries Phenylalanine amide.

This sequence belongs to the conotoxin O3 superfamily. In terms of tissue distribution, expressed by the venom duct.

It localises to the secreted. This is Conotoxin TsMSGL-11 from Conus tessulatus (Tessellate cone).